The chain runs to 456 residues: 3-isopropylmalate dehydratase large subunit (456 aa).

Positions 336, 396, and 399 each coordinate [4Fe-4S] cluster.

The protein belongs to the aconitase/IPM isomerase family. LeuC type 1 subfamily. Heterodimer of LeuC and LeuD. [4Fe-4S] cluster serves as cofactor.

The catalysed reaction is (2R,3S)-3-isopropylmalate = (2S)-2-isopropylmalate. It participates in amino-acid biosynthesis; L-leucine biosynthesis; L-leucine from 3-methyl-2-oxobutanoate: step 2/4. Catalyzes the isomerization between 2-isopropylmalate and 3-isopropylmalate, via the formation of 2-isopropylmaleate. In Staphylococcus aureus (strain MW2), this protein is 3-isopropylmalate dehydratase large subunit.